A 136-amino-acid chain; its full sequence is Transcription antitermination protein NusB (136 aa).

Belongs to the NusB family.

In terms of biological role, involved in transcription antitermination. Required for transcription of ribosomal RNA (rRNA) genes. Binds specifically to the boxA antiterminator sequence of the ribosomal RNA (rrn) operons. This Salinispora arenicola (strain CNS-205) protein is Transcription antitermination protein NusB.